Reading from the N-terminus, the 114-residue chain is Ribosome-binding factor A (114 aa).

Belongs to the RbfA family. As to quaternary structure, monomer. Binds 30S ribosomal subunits, but not 50S ribosomal subunits or 70S ribosomes.

It is found in the cytoplasm. Functionally, one of several proteins that assist in the late maturation steps of the functional core of the 30S ribosomal subunit. Associates with free 30S ribosomal subunits (but not with 30S subunits that are part of 70S ribosomes or polysomes). Required for efficient processing of 16S rRNA. May interact with the 5'-terminal helix region of 16S rRNA. The chain is Ribosome-binding factor A from Phytoplasma mali (strain AT).